The sequence spans 170 residues: Peptide deformylase 2 (170 aa).

Fe cation contacts are provided by Cys-94 and His-136. Glu-137 is a catalytic residue. His-140 lines the Fe cation pocket.

It belongs to the polypeptide deformylase family. It depends on Fe(2+) as a cofactor.

It carries out the reaction N-terminal N-formyl-L-methionyl-[peptide] + H2O = N-terminal L-methionyl-[peptide] + formate. Removes the formyl group from the N-terminal Met of newly synthesized proteins. Requires at least a dipeptide for an efficient rate of reaction. N-terminal L-methionine is a prerequisite for activity but the enzyme has broad specificity at other positions. This chain is Peptide deformylase 2, found in Xanthomonas campestris pv. campestris (strain ATCC 33913 / DSM 3586 / NCPPB 528 / LMG 568 / P 25).